We begin with the raw amino-acid sequence, 67 residues long: Large ribosomal subunit protein uL29 (67 aa).

This sequence belongs to the universal ribosomal protein uL29 family.

In Ruminiclostridium cellulolyticum (strain ATCC 35319 / DSM 5812 / JCM 6584 / H10) (Clostridium cellulolyticum), this protein is Large ribosomal subunit protein uL29.